The sequence spans 444 residues: uncharacterized protein (444 aa).

The next 12 membrane-spanning stretches (helical) occupy residues 2 to 22 (PILI…KVKL), 24 to 44 (TFVS…MDIN), 52 to 72 (TGIG…AMLG), 106 to 126 (FIIG…PIVY), 134 to 154 (MPFL…HGFL), 174 to 194 (VLLF…PLFN), 228 to 248 (FAIS…ATIF), 261 to 281 (IIEF…LALY), 305 to 325 (IAMM…LIDG), 343 to 363 (LFVA…ATVA), 377 to 397 (AGSV…VIAC), and 424 to 444 (LLTT…GLVM).

The protein belongs to the GntP permease family.

The protein localises to the cell membrane. This is an uncharacterized protein from Bacillus subtilis (strain 168).